The chain runs to 420 residues: MVNEYKRIVLLTGLMGINDHDFRMVKSLLSKELKLNRMQDQYDRVKIADLMEDKFPKDAGVDQLIKLYKQIPGLGDIANKLKNEKAKAKRTRTGKRKTAAKRQRQEEPSTSQPMSTTNEDAEPESGRSTPDTQVAQLSLPTASRRNQAIQISPTIASSSGQTSSRSSETLQSIIQSPKTPKRPSSSILDPPVSSGTASSSAQALGVPLATIAKRQRLKNVPKEPSEENGHQQGSKKVMVLKVTEPFSYDVTEEKMFHATVATETEFFRVKVFDIVLKEKFIPNKVLTISNYVGCNGFINIYSASSVSEVNDGEPMNIPLSLRKSANRTPKINYLCSKKRGIFVNGVFTVCKKEEKWNYICYEIGDDTGMMEVEVYGRLTNIACNPGDKLRLICFKLIPDEEKAQLRSTTHSNMQVIKAKN.

Residues 1 to 87 (MVNEYKRIVL…ANKLKNEKAK (87 aa)) form the Pyrin domain. Disordered stretches follow at residues 82 to 201 (KNEK…SSSA) and 216 to 236 (RLKNVPKEPSEENGHQQGSKK). The span at 87–102 (KAKRTRTGKRKTAAKR) shows a compositional bias: basic residues. Polar residues-rich tracts occupy residues 108 to 118 (PSTSQPMSTTN) and 126 to 151 (GRSTPDTQVAQLSLPTASRRNQAIQI). Residues 152–169 (SPTIASSSGQTSSRSSET) show a composition bias toward low complexity. The span at 170-201 (LQSIIQSPKTPKRPSSSILDPPVSSGTASSSA) shows a compositional bias: polar residues. Positions 219–416 (NVPKEPSEEN…STTHSNMQVI (198 aa)) constitute an HIN-200 domain. Basic and acidic residues predominate over residues 220–229 (VPKEPSEENG).

The protein belongs to the HIN-200 family.

It is found in the nucleus. In Mus musculus (Mouse), this protein is Pyrin and HIN domain-containing protein 1.